The primary structure comprises 103 residues: Small ribosomal subunit protein uS10 (103 aa).

It belongs to the universal ribosomal protein uS10 family. As to quaternary structure, part of the 30S ribosomal subunit.

Functionally, involved in the binding of tRNA to the ribosomes. This chain is Small ribosomal subunit protein uS10, found in Persephonella marina (strain DSM 14350 / EX-H1).